Consider the following 288-residue polypeptide: Fructokinase (288 aa).

T131 contributes to the ATP binding site. H154, C169, H172, and C175 together coordinate Zn(2+). ATP-binding positions include P183 and 231–235 (GVMNQ).

It belongs to the ROK (NagC/XylR) family. Mg(2+) is required as a cofactor.

It carries out the reaction D-fructose + ATP = D-fructose 6-phosphate + ADP + H(+). Inhibition by zinc ions. This chain is Fructokinase (scrK), found in Pediococcus pentosaceus.